Consider the following 320-residue polypeptide: Phospho-N-acetylmuramoyl-pentapeptide-transferase (320 aa).

Transmembrane regions (helical) follow at residues 7–27 (ILAI…VIPF), 50–70 (GTPT…SLIF), 77–97 (IGAP…DDFI), 113–133 (LVLQ…HLGS), 148–168 (WAYV…VNLT), 173–193 (GLAS…SIFS), 198–216 (MAIF…LRYN), 221–241 (VVFM…AIAV), 247–267 (VLVL…MLQV), and 297–317 (VVVV…AMIQ).

Belongs to the glycosyltransferase 4 family. MraY subfamily. Requires Mg(2+) as cofactor.

It is found in the cell membrane. It catalyses the reaction UDP-N-acetyl-alpha-D-muramoyl-L-alanyl-gamma-D-glutamyl-meso-2,6-diaminopimeloyl-D-alanyl-D-alanine + di-trans,octa-cis-undecaprenyl phosphate = di-trans,octa-cis-undecaprenyl diphospho-N-acetyl-alpha-D-muramoyl-L-alanyl-D-glutamyl-meso-2,6-diaminopimeloyl-D-alanyl-D-alanine + UMP. The protein operates within cell wall biogenesis; peptidoglycan biosynthesis. Functionally, catalyzes the initial step of the lipid cycle reactions in the biosynthesis of the cell wall peptidoglycan: transfers peptidoglycan precursor phospho-MurNAc-pentapeptide from UDP-MurNAc-pentapeptide onto the lipid carrier undecaprenyl phosphate, yielding undecaprenyl-pyrophosphoryl-MurNAc-pentapeptide, known as lipid I. The sequence is that of Phospho-N-acetylmuramoyl-pentapeptide-transferase from Caldicellulosiruptor bescii (strain ATCC BAA-1888 / DSM 6725 / KCTC 15123 / Z-1320) (Anaerocellum thermophilum).